The sequence spans 146 residues: Hemoglobin subunit beta (146 aa).

N-acetylvaline is present on valine 1. The 145-residue stretch at 2–146 (HLTDGEKNAL…VANALAHKYH (145 aa)) folds into the Globin domain. Phosphoserine is present on serine 44. Lysine 59 carries the post-translational modification N6-acetyllysine. Position 63 (histidine 63) interacts with heme b. Lysine 82 bears the N6-acetyllysine mark. Histidine 92 contacts heme b. Cysteine 93 carries the S-nitrosocysteine modification. Lysine 144 carries the post-translational modification N6-acetyllysine.

It belongs to the globin family. As to quaternary structure, heterotetramer of two alpha chains and two beta chains. As to expression, red blood cells.

In terms of biological role, involved in oxygen transport from the lung to the various peripheral tissues. The chain is Hemoglobin subunit beta from Otospermophilus beecheyi (California ground squirrel).